Here is a 186-residue protein sequence, read N- to C-terminus: Tumor necrosis factor alpha-induced protein 8-like protein 1 (186 aa).

This sequence belongs to the TNFAIP8 family. Interacts with FBXW5; TNFAIP8L1 competes with TSC2 to bind FBXW5 increasing TSC2 stability by preventing its ubiquitination. As to expression, detected in wide variety tissues, such as neurons in brain, hepatocytes, germ cells of female and male reproductive organs, muscular tissues and variety types of cells of the epithelial origin (at protein level).

Its subcellular location is the cytoplasm. In terms of biological role, acts as a negative regulator of mTOR activity. This Mus musculus (Mouse) protein is Tumor necrosis factor alpha-induced protein 8-like protein 1 (Tnfaip8l1).